We begin with the raw amino-acid sequence, 166 residues long: Myosin regulatory light chain 2, ventricular/cardiac muscle isoform (166 aa).

At Ala-2 the chain carries N,N,N-trimethylalanine. 2 positions are modified to phosphoserine; by MLCK: Ser-14 and Ser-15. At Ser-19 the chain carries Phosphoserine. EF-hand domains follow at residues 24 to 59 (TQIQEFKEAFTIMDQNRDGFIDKNDLRDTFAALGRV), 94 to 129 (DPEETILNAFKVFDPEGKGSLKADYVREMLTTQAER), and 130 to 165 (FSKEEIDQMFAAFPPDVTGNLDYKNLVHIITHGEEK). Residues Asp-37, Asn-39, Asp-41, and Asp-48 each coordinate Ca(2+). Position 52 is a phosphothreonine (Thr-52).

As to quaternary structure, myosin is a hexamer of 2 heavy chains and 4 light chains. Interacts with MYOC. N-terminus is methylated by METTL11A/NTM1. Post-translationally, phosphorylated by MYLK3 and MYLK2; promotes cardiac muscle contraction and function. Dephosphorylated by PPP1CB complexed to PPP1R12B. The phosphorylated form in adult is expressed as gradients across the heart from endocardium (low phosphorylation) to epicardium (high phosphorylation); regulates cardiac torsion and workload distribution. In terms of tissue distribution, abundantly expressed in both cardiac and slow skeletal muscle. In the adult heart, the phosphorylated form is highly expressed in epicardium and weakly in endocardium.

The protein resides in the cytoplasm. It localises to the myofibril. It is found in the sarcomere. The protein localises to the a band. Its function is as follows. Contractile protein that plays a role in heart development and function. Following phosphorylation, plays a role in cross-bridge cycling kinetics and cardiac muscle contraction by increasing myosin lever arm stiffness and promoting myosin head diffusion; as a consequence of the increase in maximum contraction force and calcium sensitivity of contraction force. These events altogether slow down myosin kinetics and prolong duty cycle resulting in accumulated myosins being cooperatively recruited to actin binding sites to sustain thin filament activation as a means to fine-tune myofilament calcium sensitivity to force. During cardiogenesis plays an early role in cardiac contractility by promoting cardiac myofibril assembly. The protein is Myosin regulatory light chain 2, ventricular/cardiac muscle isoform of Mus musculus (Mouse).